A 129-amino-acid chain; its full sequence is Capsid protein (129 aa).

Positions 31–104 (EWISSNSRSQ…FATNSDCELI (74 aa)) are viral RNA-binding.

It belongs to the Leviviricetes capsid protein family. In terms of assembly, homodimer. The capsid proteins form dimers that assemble by group of 5. Twelve such pentamers are linked together with free dimers. The homodimers binds to the viral RNA via an operator hairpin, but also to many other RNA sequences in the viral genome; this interaction probably shifts the virus from the replicative to the assembly phase and ensures specific encapsidation of the viral genome.

It localises to the virion. Its function is as follows. Capsid protein self-assembles to form an icosahedral capsid with a T=3 symmetry, about 26 nm in diameter, and consisting of 89 capsid proteins dimers (178 capsid proteins). Involved in viral genome encapsidation through the interaction between a capsid protein dimer and the multiple packaging signals present in the RNA genome. The capsid also contains 1 copy of the A2 maturation protein. In terms of biological role, acts as a translational repressor of viral replicase synthesis late in infection. This latter function is the result of capsid protein interaction with an RNA hairpin which contains the replicase ribosome-binding site. The sequence is that of Capsid protein from Enterobacteria phage f2 (Bacteriophage f2).